The chain runs to 65 residues: Small ribosomal subunit protein bS21 (65 aa).

The segment at 45–65 (GRLKRSRSKRRAQRANEERNS) is disordered. Residues 48-57 (KRSRSKRRAQ) show a composition bias toward basic residues.

It belongs to the bacterial ribosomal protein bS21 family.

The polypeptide is Small ribosomal subunit protein bS21 (Chlorobium luteolum (strain DSM 273 / BCRC 81028 / 2530) (Pelodictyon luteolum)).